Consider the following 359-residue polypeptide: DNA replication and repair protein RecF (359 aa).

An ATP-binding site is contributed by 30–37 (GPNGSGKT).

The protein belongs to the RecF family.

The protein localises to the cytoplasm. Functionally, the RecF protein is involved in DNA metabolism; it is required for DNA replication and normal SOS inducibility. RecF binds preferentially to single-stranded, linear DNA. It also seems to bind ATP. This Aliivibrio fischeri (strain MJ11) (Vibrio fischeri) protein is DNA replication and repair protein RecF.